The primary structure comprises 401 residues: All trans-polyprenyl-diphosphate synthase PDSS2 (401 aa).

The protein belongs to the FPP/GGPP synthase family. As to quaternary structure, heterotetramer composed of 2 PDSS1/DPS1 and 2 PDSS2/DLP1 subunits.

Its subcellular location is the mitochondrion. It catalyses the reaction 7 isopentenyl diphosphate + (2E,6E)-farnesyl diphosphate = all-trans-decaprenyl diphosphate + 7 diphosphate. The catalysed reaction is 6 isopentenyl diphosphate + (2E,6E)-farnesyl diphosphate = all-trans-nonaprenyl diphosphate + 6 diphosphate. It participates in cofactor biosynthesis; ubiquinone biosynthesis. Heterotetrameric enzyme that catalyzes the condensation of farnesyl diphosphate (FPP), which acts as a primer, and isopentenyl diphosphate (IPP) to produce prenyl diphosphates of varying chain lengths and participates in the determination of the side chain of ubiquinone. Supplies nona and decaprenyl diphosphate, the precursors for the side chain of the isoprenoid quinones ubiquinone-9 (Q9) and ubiquinone-10 (Q10) respectively. The enzyme adds isopentenyl diphosphate molecules sequentially to farnesyl diphosphate with trans stereochemistry. May play a role during cerebellar development. May regulate mitochondrial respiratory chain function. The sequence is that of All trans-polyprenyl-diphosphate synthase PDSS2 from Rattus norvegicus (Rat).